A 519-amino-acid polypeptide reads, in one-letter code: Cytochrome P450 monooxygenase FPY7 (519 aa).

The helical transmembrane segment at 12–34 (SLSLRWKIIVTLLAIYTLRIIGT) threads the bilayer. Cys465 is a binding site for heme.

The protein belongs to the cytochrome P450 family. Heme is required as a cofactor.

It localises to the membrane. It functions in the pathway secondary metabolite biosynthesis. In terms of biological role, cytochrome P450 monooxygenase; part of the gene cluster that mediates the biosynthesis of the gamma-pyrones fusapyrone (FPY) and deoxyfusapyrone (dFPY). FPY is an undecaketide and thus likely synthesized by the polyketide synthase FPY1 from acetyl-CoA functioning as starter unit and the addition of 10 malonyl-CoA extender units by successive Claisen-condensations. Next to this, FPY shares some rare features: C-glycosylated 4-deoxyglucose at C-3, a gem-dimethyl group at C-13, and an alpha-beta to beta-gamma double bond shift at C-20. During FPY biosynthesis mono-C-methyl groups are transferred to the tetra-, penta-, hexa- and heptaketide, while two C-methyl groups are transferred to the nonaketide, suggesting that the CMet domain is programmed to selectively catalyze two successive C-alpha-methylation reactions of the nonaketide, while other alpha-carbons are non- or mono-methylated only. While the origin of the 4'-deoxyglucose moiety remains opaque, its transfer to C-3 is most likely mediated by the C-glycosyltransferase FPY2. Next to this, the hydroxyl group present at C-33 and discriminating between FPY and dFPY, is likely to be installed by the cytochrome P450 monooxygenase FPY7. No putative function can be predicted for the remaining genes FPY3-FPY6. This is Cytochrome P450 monooxygenase FPY7 from Fusarium mangiferae (Mango malformation disease fungus).